We begin with the raw amino-acid sequence, 497 residues long: NADH-quinone oxidoreductase subunit N (497 aa).

Helical transmembrane passes span 12–32 (MAPE…DLAL), 40–60 (PLAW…AAMI), 80–100 (AFKF…AEWA), 116–136 (LFAL…TLFV), 166–186 (VING…VFGL), 208–228 (LALA…TVPF), 240–260 (PVPA…ALLL), 284–304 (MQPI…VVAL), 316–336 (SGIA…WAMI), 341–361 (MYLL…AHIV), 383–403 (AAAL…AGFI), 430–450 (TVIS…RPTF), and 457–477 (LPAG…AIGW).

It belongs to the complex I subunit 2 family. In terms of assembly, NDH-1 is composed of 14 different subunits. Subunits NuoA, H, J, K, L, M, N constitute the membrane sector of the complex.

Its subcellular location is the cell membrane. It carries out the reaction a quinone + NADH + 5 H(+)(in) = a quinol + NAD(+) + 4 H(+)(out). Functionally, NDH-1 shuttles electrons from NADH, via FMN and iron-sulfur (Fe-S) centers, to quinones in the respiratory chain. The immediate electron acceptor for the enzyme in this species is believed to be a menaquinone. Couples the redox reaction to proton translocation (for every two electrons transferred, four hydrogen ions are translocated across the cytoplasmic membrane), and thus conserves the redox energy in a proton gradient. The protein is NADH-quinone oxidoreductase subunit N of Geobacillus kaustophilus (strain HTA426).